We begin with the raw amino-acid sequence, 77 residues long: Small ribosomal subunit protein uS17 (77 aa).

This sequence belongs to the universal ribosomal protein uS17 family. As to quaternary structure, part of the 30S ribosomal subunit.

Functionally, one of the primary rRNA binding proteins, it binds specifically to the 5'-end of 16S ribosomal RNA. The chain is Small ribosomal subunit protein uS17 from Rickettsia bellii (strain OSU 85-389).